Here is a 635-residue protein sequence, read N- to C-terminus: Iron transport multicopper oxidase FET3 (635 aa).

A signal peptide spans 1–17; the sequence is MMVPLLLSTYFITAVYG. Topologically, residues 18–559 are extracellular; the sequence is ATHTFHWTTG…KSIPTGFTKK (542 aa). Plastocyanin-like domains are found at residues 42–140 and 190–292; these read ITCN…FVIE and NLIL…LQLN. Asn70 and Asn73 each carry an N-linked (GlcNAc...) asparagine glycan. Residues His77 and His79 each coordinate Cu cation. N-linked (GlcNAc...) asparagine glycosylation occurs at Asn109. Residues His122 and His124 each coordinate Cu cation. N-linked (GlcNAc...) asparagine glycosylation is found at Asn194, Asn198, Asn244, Asn265, Asn292, and Asn359. In terms of domain architecture, Plastocyanin-like 3 spans 382–501; that stretch reads NPFIYGTNTN…QGLAVVMVED (120 aa). Residues His413, His416, and His418 each contribute to the Cu cation site. The N-linked (GlcNAc...) asparagine glycan is linked to Asn443. Cu cation contacts are provided by His483, Cys484, His485, and His489. A glycan (N-linked (GlcNAc...) asparagine) is linked at Asn535. The helical transmembrane segment at 560-580 threads the bilayer; it reads GIIAMTFSCLAGVLGITMIAI. The Cytoplasmic segment spans residues 581–628; that stretch reads YGFSEIPEPEIKVMRNLHLNPEDVLEKTSSSSVISASNSSSLEDSRNQ.

This sequence belongs to the multicopper oxidase family. The cofactor is Cu cation.

It is found in the cell membrane. Iron transport multicopper ferroxidase required for Fe(2+) high affinity uptake. Required to oxidize Fe(2+) and release it from the transporter. Essential component of copper-dependent iron transport. This is Iron transport multicopper oxidase FET3 (FET3) from Candida glabrata (strain ATCC 2001 / BCRC 20586 / JCM 3761 / NBRC 0622 / NRRL Y-65 / CBS 138) (Yeast).